A 277-amino-acid polypeptide reads, in one-letter code: UPF0276 protein PSEEN3355 (277 aa).

This sequence belongs to the UPF0276 family.

This Pseudomonas entomophila (strain L48) protein is UPF0276 protein PSEEN3355.